We begin with the raw amino-acid sequence, 822 residues long: Probable RING finger protein 207 homolog (822 aa).

An RING-type zinc finger spans residues 8–42 (CTICKNEFEEPILLSCQHTTCRKCSTGSPSCKSCS). A B box-type 1; atypical zinc finger spans residues 68 to 115 (EEMEECANCEQISLPMFYCETCQQSLCLVCRNVTHQARMFSSHKIISS). Zn(2+) contacts are provided by cysteine 73, cysteine 76, cysteine 97, and histidine 102. The B box-type 2; degenerate zinc finger occupies 122–164 (YSSSLCKDHNEPYILYCSDVRKLVCIQCFNGRPLEERHSFISI). 2 coiled-coil regions span residues 526 to 558 (NSQN…GQSA) and 738 to 769 (DKDE…KVSE).

The chain is Probable RING finger protein 207 homolog from Caenorhabditis elegans.